The primary structure comprises 743 residues: MLHFNRCHHLKKITQKCFSSIHVKTDKHAQQFLSRTFALAELRKSWYSTHSLVGDKNIILMGPPGAGKTTVGRIIGQKLGCCVIDVDDDILEKTWNMSVSEKLQDVGNEQFLEEEGKAVLNFSASGSVISLTGSNPMHDASMWHLKKNGIIVYLDVPLLDLIHRLKLMKTDRIVGQNSGTSVKDLLKFRRQYYKKWYDARVFCESGASPEEVADKVLNAIKRYQDVDSETFISTRHVWPKDGEQKLSAKFFSEAVIEGLASDGGLFVPAKEFPKLSCGEWKSLVGATYIERAQILLERCIHPADIPAARLGEMIETAYGENFACSKIAPVRHLSGNQFILELFHGPTGSFKDLSLQLMPHIFAHCIPPSCNYVILVATSGDTGSAVLNGFSRLNKNDKQRIAVVAFFPENGVSDFQKAQIIGSQRENGWAVGVESDFDFCQTAIKRIFDDSDFTGFLTVEYGTILSSANSINWGRLLPQVVYHASAYLDLISQGFISFGSPVDVCIPTGNFGNILAAVYAKMMGIPIRKFICASNQNHVLTDFIKTGHYDLRERKLAQTFSPSIDILKSSNLERHLHLMANKDGQLMTELFNRLESQHHFQIEKALVEKLQQDFIADWCSEGECLAAINSTYNTSGYILDPHTAVAKVVADRVQDKSCPLIISSTAHYSKFAPAIMQALKIKEINETSSSQLYLLGSYNALPPLHEALLERTKQQEKMEYQVCAADVNVLKSHVEKLIQNQFI.

Lysine 281 carries the N6-acetyllysine modification. Lysine 351 carries the post-translational modification N6-(pyridoxal phosphate)lysine.

This sequence belongs to the threonine synthase family. Requires pyridoxal 5'-phosphate as cofactor.

This is Threonine synthase-like 1 (THNSL1) from Pongo abelii (Sumatran orangutan).